We begin with the raw amino-acid sequence, 2298 residues long: MPNTTMELFIFGDQTLDVQPCLRGLAQHRHNPVLEDFFTKTYQVLRTEIDQLPHNVKVGLPRFTCIDDIIFRPPGSKSCIALDMAMTTFYQLGVFIRVTCALGLCTGALAAAAVSCSRNALDLVPMAVDAVRVAFRTGAHVLDIAHRIESPDASDQSWLLYVPAVEAAETALKAFREHTLLPGIRQPYITAYTLNSVMVSGPPSSLEQLKRHAPFRELNPQSVSINGPYHAPHLYSQEDIDDIVGDLACQDVHSCSCRVPVIAGDGNPVPDADFGTILKAAVAQILRQQINWNGILRELLTRHDIAGSLTLTVTTIGTKTDHFIYNVLKQSPLREYLSSKPAQSRQPVSNEGAPEPGNGRQKLAIIGMSGRFPGADDIEEFWTLLEQGLDVHKPVPSLRWDAQTHVDPTRARKNTSSTPFGCWLEHPDLFDARFFNISPREAPQIDPAQRLALMTAYEAIEQAGIVPDATPSTRRDRVGVFYGTTSNDWMETNSAQNIDTYFIPGGNRAFIPGRINYYFKFSGPSYAVDTACSSSLASIHLACNALWRREIDTAIAGGTNVLTNPDFTAGLDRGQFLSRTGNCKTFDDSADGYCRGEGVATVIIKRLEDAVADKDPILGLILSASTNHSAESESITRPHVGAQREILSNILNRGASNPYDVSYVEMHGTGTQVGDASEMSSVLETFAPAPNRVKSARGHDTPLYLGSAKANIGHGEAVSGVSSLIKVLLMMQRNTIVPHCGIKTKINHKFPTDLKDRNAHIALQPVSWERNSASSQTRKVVVNNFSAAGGNSALLVEDAPPKRESPGEAALVDPRQHHVVAVSARNAVSLEGNIRSMLKYLRENPDVQLGKLSYTTTARRLHHQHRVMVTGSKVEDIATQLQAALDEKTGMTRPKAALKVVFAFTGQGAHYPGMGKELFENFSVFRTEVHRLDRLGQTMGFPSVLPVIQSPANDIDIGTFQPSAVQLAGVCTQMALCKLWAAWNITPTAVVGHSLGEYPALNAAGVLSDADTIYLVGKRAQLLEEKCVRGTHSMLAIKASVDQITGALENMKYHVACINSPVETVLAAANEELYALKDVLTAAGFKSTPLKVPYAFHSPQVDPVLADFKELSRGVTFSRPRIPILSALDGNLHVDDHFFDPEYLIRHTREPVNMHRTLLTAAREHVITEMTTVLEIGSHPAVSGMVKGVLGPQVSCLATASRGRPNLQVLAATLKVLYMKGADICWPQYHIDFKASHEVIPLPAYSWDLKSYWIQYVNDWSLRKGDPPQVIQSSPALESTTVHRVVEETHDSTKTRIVIEADIARKDLSPLVQGHEVDGIPLCTPSVYADMALTLGTYLLKRYRPDQNDSLVDVTDMVISKALILRAGASEQLLQAHADADWAANAVTIKFKSFDARQKLQEHSQCVVRFRDRGLLEDLQNSAPSVKAKTQALRDGIVTGETARFNRPMVYRAIRPLAKFHEDYRAIDEIVLNSETLEASSRLSFGDVKRGGTYHTHPAIIDSLTQSCGFTMNCNDRSDLDKEVFMNHGWGSLQIFEPLSFDKVYTTYTRMAEGSDHLWHGDVVIFDGDKVVAYIGQISIQGVPRRVLKTVLSIESGSQKKHQPTQMKQPHTATQANGYPVANGHAQATPTSGPVNGEPRPSRFPRALEIIAEESGLSLADLTDTTVFSDVGIDSLLNLTISSRFKEEFDVDLDFTALSQDYPTVASLRALLSEPERSTNGMPAASAKDTSRFDEIPPMNGHKTNGHVMNGHSNGSSNGLPDTDKVDFQRVLQIISEESGVAMEELSEDTNFADAGIDSLLSLVIVSRFRDELELDIAHESLLMDCQSVADLKRYLFPQDHSTAENGVEPPAKNGLAADAPAVSSMSQDIISNGNGETAQPLGASLLLRQKAVDHYVQKYTAGFNAPIPNGAGNESEKTDNVKVVLVTGASGSLGGHLIDQLAQRADVKTVVCLNREHNLEPYTRQQKAMRDKGIRSFDKIRSKLLVLQTDSSQPMLGLPKSQYEELVDSVTHVIHNAWPMSAKRPLDGFEKQFQILRNLIDFACVVTSRRPKSFKFGFQLVSSIGVVGHHGLSKPHDRKEKTIVPESRVNIDSVLPNGYSEAKWACERMLDETLHKHYADRVRTMVVRLGQIAGSKRCGYWNPTEHFGFLIKSSQTLNALPDVPGMVYWTPVEEVAGSLVDLILADNRPYPVYHVDNPIGQPWSEMNKVLADALNIPNLVPFVEWVERVRSAPHRDNPAAMLSDFFIDNYLRMSCGGLVLDVKNTLEHSRVLSGVGPVTEDVVRKYIHVWKEIGFLK.

An N-terminal acylcarrier protein transacylase domain (SAT) region spans residues 8-333; that stretch reads LFIFGDQTLD…IYNVLKQSPL (326 aa). Residues 336–361 form a disordered region; that stretch reads YLSSKPAQSRQPVSNEGAPEPGNGRQ. A compositionally biased stretch (polar residues) spans 340-349; the sequence is KPAQSRQPVS. The 439-residue stretch at 360–798 folds into the Ketosynthase family 3 (KS3) domain; the sequence is RQKLAIIGMS…GGNSALLVED (439 aa). Active-site for beta-ketoacyl synthase activity residues include Cys-532, His-667, and His-714. The acyl/malonyl transferases stretch occupies residues 901–1193; that stretch reads VFAFTGQGAH…GMVKGVLGPQ (293 aa). The For acyl/malonyl transferase activity role is filled by Ser-994. The interval 1283 to 1415 is N-terminal hotdog fold; that stretch reads HRVVEETHDS…CVVRFRDRGL (133 aa). Positions 1283-1589 constitute a PKS/mFAS DH domain; it reads HRVVEETHDS…IQGVPRRVLK (307 aa). The tract at residues 1294–1586 is product template (PT) domainn; sequence KTRIVIEADI…QISIQGVPRR (293 aa). Catalysis depends on His-1315, which acts as the Proton acceptor; for dehydratase activity. The interval 1438-1589 is C-terminal hotdog fold; it reads VTGETARFNR…IQGVPRRVLK (152 aa). Catalysis depends on Asp-1502, which acts as the Proton donor; for dehydratase activity. Positions 1619–1642 are disordered; sequence YPVANGHAQATPTSGPVNGEPRPS. A Carrier 1 domain is found at 1641 to 1716; the sequence is PSRFPRALEI…SLRALLSEPE (76 aa). Residue Ser-1675 is modified to O-(pantetheine 4'-phosphoryl)serine. A disordered region spans residues 1716–1762; it reads ERSTNGMPAASAKDTSRFDEIPPMNGHKTNGHVMNGHSNGSSNGLPD. A compositionally biased stretch (polar residues) spans 1751 to 1760; the sequence is GHSNGSSNGL. The Carrier 2 domain maps to 1765–1840; the sequence is KVDFQRVLQI…DLKRYLFPQD (76 aa). O-(pantetheine 4'-phosphoryl)serine is present on Ser-1799. Residues 1927–2178 form a reductase (R) domain region; the sequence is VTGASGSLGG…YWTPVEEVAG (252 aa).

It functions in the pathway pigment biosynthesis. It participates in secondary metabolite biosynthesis. Non-reducing polyketide synthase; part of the gene cluster that mediates the biosynthesis of pleosporalin A, ascomycone A, as well as a third cryptic naphthoquinone derived pigment, all responsible for the coloration of conidia. The non-reducing polyketide synthase pgmA is responsible for the condensation of seven acetyl-CoA units to produce the cyclized heptaketide 3-acetonyl-1,6,8-trihydroxy-2-naphthaldehyde. The pathway begins with the biosynthesis of the cyclized heptaketide 3-acetonyl-1,6,8-trihydroxy-2-naphthaldehyde by the NR-PKS pgmA. The C-6 hydroxyl group is further methylated by the O-methyltransferase pgmB to yield fusarubinaldehyde which is in turn oxidized by the cytochrome P450 monooxygenase pgmC at C-9. The C-1 hydroxyl group is then methylated spontaneously. Although pgmE, pgmD and pgmH are essential for the production of pleosporalin A, it is not the case for the 2 other final products and it remains difficult to assign a specific function to each enzyme. PgmF and pgmG seem not to be involved in pigment biosynthesis although they were regulated by the cluster-specific transcription factor pgmR. The chain is Non-reducing polyketide synthase pgmA from Aspergillus terreus (strain NIH 2624 / FGSC A1156).